Here is a 398-residue protein sequence, read N- to C-terminus: MNTPTHTHPHPFGSTATIRCERAAAELRTGRPVLLIDAHARRHAVMALDSMTAQSFATFANAVGNTHYLFLTPVRSNVLGLEAPQGARIPLATLSYDSLAKLAYLRQPTRPTAWAPGDIMDAAATEITRLALLLPAIVAAPLTQHTEHAFADCQTLDLADLDTAAACASTTEYELVTRTPVPLRDLGMSEFIVFRGGIAQRDQVAILIGRPDLSSAVPVRVHSSCLTGDLFGSLKCDCGDQLRHSLATLKALGGGVLLYLDQEGRGNGIAAKIRAYGYQHVGLDTIDADAQLGFGPDERRYTGAVMMLRALGITRIQLLSNNPAKAERLRAAGIIVKQRISVIGQITKQNEHYLRTKVSRAGHDLDIDALIMTSQRPQDPSETVDGETVKPIAKTGHA.

Positions 1–172 are unknown; sequence MNTPTHTHPH…TAAACASTTE (172 aa). Positions 173 to 398 are GTP cyclohydrolase II; that stretch reads YELVTRTPVP…VKPIAKTGHA (226 aa). Position 220 to 224 (220 to 224) interacts with GTP; it reads RVHSS. Residues Cys225, Cys236, and Cys238 each coordinate Zn(2+). GTP contacts are provided by residues Gln241, 263-265, and Thr285; that span reads EGR. Residue Asp297 is the Proton acceptor of the active site. The active-site Nucleophile is the Arg299. Residues Ser320 and Lys325 each coordinate GTP. Positions 375-398 are disordered; the sequence is QRPQDPSETVDGETVKPIAKTGHA.

It in the C-terminal section; belongs to the GTP cyclohydrolase II family. The cofactor is Zn(2+).

The enzyme catalyses GTP + 4 H2O = 2,5-diamino-6-hydroxy-4-(5-phosphoribosylamino)-pyrimidine + formate + 2 phosphate + 3 H(+). It functions in the pathway cofactor biosynthesis; riboflavin biosynthesis; 5-amino-6-(D-ribitylamino)uracil from GTP: step 1/4. In terms of biological role, catalyzes the conversion of GTP to 2,5-diamino-6-ribosylamino-4(3H)-pyrimidinone 5'-phosphate (DARP), formate and pyrophosphate. This Xylella fastidiosa (strain Temecula1 / ATCC 700964) protein is GTP cyclohydrolase-2 (ribA).